The following is a 478-amino-acid chain: MYVLVLIHMCYHFTMKRKKLFVYFIFLSFIINFNFNININFVCSNVIQDVISIGNVDICVVNVNSDEAQECILNNEFGKLLLFVCNMNDAFSTTAKTHPENCPSRAFVNQSNPTENSPEVDTYSIYPNLFGTNENRLNDTYSLYSTPYSNMDIDFSCLCYGDKQDKVKHIMRINIKKTRKKIKGCDFGDNIPSKRDLTNSLSLNERSSCIIHAYSNDVLGINCFKKEINNSYNNNLELNPSNCFHDVYFGADLILNSKNVIPNSRVIPDPSSDVKLSRNHSFSSYLILPNNLTENIKISCTCKRDEFVGTMIIYTKNINSLMFDNNNNNNDEEQIFQNKYMKKKEYKKDEGNEYDKKMNTDDNYINNEEHHNNNQYNNYENKINNVNYNYDDISKYINEHYKNYDHEKNSKNSYKTNTNIHDQYDTYHYNNKYDLHSDRTRIRTRTFWQNLFGLSSSKYILFNNFLILFIFLIYIYST.

Residues methionine 1–phenylalanine 41 form the signal peptide. 6-Cys domains are found at residues valine 42–threonine 178 and lysine 181–asparagine 326. Disulfide bonds link cysteine 59-cysteine 71, cysteine 85-cysteine 159, cysteine 102-cysteine 157, cysteine 185-cysteine 209, cysteine 223-cysteine 302, and cysteine 243-cysteine 300. 2 N-linked (GlcNAc...) asparagine glycosylation sites follow: asparagine 109 and asparagine 138. Residues asparagine 229, asparagine 279, and asparagine 291 are each glycosylated (N-linked (GlcNAc...) asparagine). Serine 455 carries GPI-anchor amidated serine lipidation. A propeptide spans serine 456 to threonine 478 (removed in mature form).

The protein localises to the cell surface. The protein resides in the cell membrane. Involved in sporozoite infection of hepatocytes and replication therein. The sequence is that of Sporozoite surface protein P36p (PF52) from Plasmodium falciparum (isolate 3D7).